The sequence spans 237 residues: Endonuclease V (237 aa).

2 residues coordinate Mg(2+): aspartate 46 and aspartate 114.

Belongs to the endonuclease V family. Mg(2+) is required as a cofactor.

Its subcellular location is the cytoplasm. It catalyses the reaction Endonucleolytic cleavage at apurinic or apyrimidinic sites to products with a 5'-phosphate.. DNA repair enzyme involved in the repair of deaminated bases. Selectively cleaves double-stranded DNA at the second phosphodiester bond 3' to a deoxyinosine leaving behind the intact lesion on the nicked DNA. This Xanthomonas oryzae pv. oryzae (strain PXO99A) protein is Endonuclease V.